The chain runs to 513 residues: MEIFNVKLNDTSIRIIFCKTLSAFRTENTIVMLKGKAVSNGKPVSTEEIARVVEEKGVSEVIENLDGVFCILIYHFNDLLIGKSIQSGPALFYCKKNMDIFVSDKISDIKFLNPDMTFSLNITMAEHYLSGNRIATQESLITGIYKVNNGEFIKFNNQLKPVLLRDEFSITKKNNSTIDSIIDNIEMMRDNRKIALLFSGGLDSALIFHTLKESGNKFCAYHFFSDESDDSEKYFAKEYCSKYGVDFISVNKNINFNEKLYFNLNPNSPDEIPLIFEQTDEEGEGQPPIDDDLLYLCGHGGDHIFGQNPSELFGIDAYRSHGLMFMHKKIVEFSNLKGKRYKDIIFSNISAFINTSNGCSPAKQEHVSDMKLASAQFFATDYTGKINKLTPFLHKNIIQHYAGLPVFSLFNQHFDRYPVRYEAFQRFGSDIFWKKTKRSSSQLIFRILSGKKDELVNTIKQSGLIEILGINHIELESILYENTTTRLTMELPYILNLYRLAKFIQLQSIDYKG.

The 261-residue stretch at 176–436 (STIDSIIDNI…FGSDIFWKKT (261 aa)) folds into the Asparagine synthetase domain.

The protein localises to the cytoplasm. Functionally, along with McjB, necessary and sufficient to process the inactive microcin J25 (McjA) precursor into the active peptide. May be involved in the formation of the amide bond between Gly-38 and Glu-53 of McjA. In Escherichia coli, this protein is Microcin J25-processing protein McjC (mcjC).